We begin with the raw amino-acid sequence, 855 residues long: Axonemal dynein light chain domain-containing protein 1 (855 aa).

Positions 1-17 (MSLPKTPSTPLNSASTS) are enriched in polar residues. The disordered stretch occupies residues 1–31 (MSLPKTPSTPLNSASTSESKKLVSVATEGTR). Coiled-coil stretches lie at residues 316 to 402 (QRIL…WSSA), 451 to 480 (LQKLTQKWRNLVNKFKQEVEEMEESTRETL), and 571 to 596 (SERQYMEEIIKNIQKLYKEYEIRING).

It localises to the cytoplasm. In terms of biological role, may be essential for spermiogenesis and male fertility probably by regulating the manchette dynamics, spermatid head shaping and sperm flagellum assembly. The chain is Axonemal dynein light chain domain-containing protein 1 (AXDND1) from Macaca fascicularis (Crab-eating macaque).